The chain runs to 823 residues: Leucine--tRNA ligase (823 aa).

The short motif at Pro41 to His51 is the 'HIGH' region element. The 'KMSKS' region motif lies at Lys580 to Ser584. Lys583 is an ATP binding site.

This sequence belongs to the class-I aminoacyl-tRNA synthetase family.

It is found in the cytoplasm. It carries out the reaction tRNA(Leu) + L-leucine + ATP = L-leucyl-tRNA(Leu) + AMP + diphosphate. The chain is Leucine--tRNA ligase from Thermosipho melanesiensis (strain DSM 12029 / CIP 104789 / BI429).